The sequence spans 321 residues: GDP-L-fucose synthase (321 aa).

An NADP(+)-binding site is contributed by glycine 14–glycine 20. Tyrosine 143 functions as the Proton donor/acceptor in the catalytic mechanism. Residues lysine 147, proline 170 to valine 173, and histidine 186 each bind NADP(+). Positions 194, 208, 215, and 277 each coordinate substrate.

The protein belongs to the NAD(P)-dependent epimerase/dehydratase family. Fucose synthase subfamily. In terms of assembly, homodimer.

It carries out the reaction GDP-beta-L-fucose + NADP(+) = GDP-4-dehydro-alpha-D-rhamnose + NADPH + H(+). It participates in nucleotide-sugar biosynthesis; GDP-L-fucose biosynthesis via de novo pathway; GDP-L-fucose from GDP-alpha-D-mannose: step 2/2. Catalyzes the two-step NADP-dependent conversion of GDP-4-dehydro-6-deoxy-D-mannose to GDP-fucose, involving an epimerase and a reductase reaction. The chain is GDP-L-fucose synthase from Homo sapiens (Human).